Reading from the N-terminus, the 422-residue chain is Probable sucrose-phosphatase 2 (422 aa).

It belongs to the sucrose phosphatase family. As to quaternary structure, homodimer. Requires Mg(2+) as cofactor.

It carries out the reaction sucrose 6(F)-phosphate + H2O = sucrose + phosphate. The protein operates within glycan biosynthesis; sucrose biosynthesis; sucrose from D-fructose 6-phosphate and UDP-alpha-D-glucose: step 2/2. Functionally, catalyzes the final step of sucrose synthesis. This chain is Probable sucrose-phosphatase 2 (SPP2), found in Arabidopsis thaliana (Mouse-ear cress).